The chain runs to 259 residues: Thiazole synthase (259 aa).

Lys-95 acts as the Schiff-base intermediate with DXP in catalysis. Residues Gly-156, 182 to 183, and 204 to 205 contribute to the 1-deoxy-D-xylulose 5-phosphate site; these read AG and NT.

It belongs to the ThiG family. In terms of assembly, homotetramer. Forms heterodimers with either ThiH or ThiS.

The protein localises to the cytoplasm. The enzyme catalyses [ThiS sulfur-carrier protein]-C-terminal-Gly-aminoethanethioate + 2-iminoacetate + 1-deoxy-D-xylulose 5-phosphate = [ThiS sulfur-carrier protein]-C-terminal Gly-Gly + 2-[(2R,5Z)-2-carboxy-4-methylthiazol-5(2H)-ylidene]ethyl phosphate + 2 H2O + H(+). It functions in the pathway cofactor biosynthesis; thiamine diphosphate biosynthesis. In terms of biological role, catalyzes the rearrangement of 1-deoxy-D-xylulose 5-phosphate (DXP) to produce the thiazole phosphate moiety of thiamine. Sulfur is provided by the thiocarboxylate moiety of the carrier protein ThiS. In vitro, sulfur can be provided by H(2)S. The polypeptide is Thiazole synthase (Baumannia cicadellinicola subsp. Homalodisca coagulata).